A 486-amino-acid polypeptide reads, in one-letter code: Glutamyl-tRNA(Gln) amidotransferase subunit A (486 aa).

Active-site charge relay system residues include Lys75 and Ser150. Ser174 functions as the Acyl-ester intermediate in the catalytic mechanism.

Belongs to the amidase family. GatA subfamily. As to quaternary structure, heterotrimer of A, B and C subunits.

It catalyses the reaction L-glutamyl-tRNA(Gln) + L-glutamine + ATP + H2O = L-glutaminyl-tRNA(Gln) + L-glutamate + ADP + phosphate + H(+). Allows the formation of correctly charged Gln-tRNA(Gln) through the transamidation of misacylated Glu-tRNA(Gln) in organisms which lack glutaminyl-tRNA synthetase. The reaction takes place in the presence of glutamine and ATP through an activated gamma-phospho-Glu-tRNA(Gln). The chain is Glutamyl-tRNA(Gln) amidotransferase subunit A from Trichormus variabilis (strain ATCC 29413 / PCC 7937) (Anabaena variabilis).